The chain runs to 834 residues: Putative COX1/OXI3 intron 1 protein (834 aa).

The disordered stretch occupies residues 162 to 188 (MKDTNNTKGNTKSEGSTERGNSGVDRG). A compositionally biased stretch (polar residues) spans 167-181 (NTKGNTKSEGSTERG). The region spanning 296 to 577 (LSNELGTGKF…TPARFLGYNI (282 aa)) is the Reverse transcriptase domain.

The protein resides in the mitochondrion. The chain is Putative COX1/OXI3 intron 1 protein (AI1) from Saccharomyces cerevisiae (strain ATCC 204508 / S288c) (Baker's yeast).